A 121-amino-acid chain; its full sequence is uncharacterized protein (121 aa).

It to M.jannaschii MJ0017 and MJ1466.

This is an uncharacterized protein from Aquifex aeolicus (strain VF5).